A 423-amino-acid polypeptide reads, in one-letter code: Replication factor C large subunit (423 aa).

Position 63 to 70 (63 to 70 (GPPGIGKT)) interacts with ATP.

Belongs to the activator 1 small subunits family. RfcL subfamily. As to quaternary structure, heteromultimer composed of small subunits (RfcS) and large subunits (RfcL).

In terms of biological role, part of the RFC clamp loader complex which loads the PCNA sliding clamp onto DNA. In Pyrobaculum islandicum (strain DSM 4184 / JCM 9189 / GEO3), this protein is Replication factor C large subunit.